The following is a 443-amino-acid chain: 23S rRNA (uracil(1939)-C(5))-methyltransferase RlmD (443 aa).

The TRAM domain maps to 12-70 (AKKLSQKIALKVQRLDHLGAGIAEHQGKVVFIPGALPGETVEVQLTEQKKNYARAKLQR). The [4Fe-4S] cluster site is built by C83, C89, C92, and C171. Residues Q276, F305, N310, E326, D353, and D373 each coordinate S-adenosyl-L-methionine. C399 serves as the catalytic Nucleophile.

This sequence belongs to the class I-like SAM-binding methyltransferase superfamily. RNA M5U methyltransferase family. RlmD subfamily.

The catalysed reaction is uridine(1939) in 23S rRNA + S-adenosyl-L-methionine = 5-methyluridine(1939) in 23S rRNA + S-adenosyl-L-homocysteine + H(+). In terms of biological role, catalyzes the formation of 5-methyl-uridine at position 1939 (m5U1939) in 23S rRNA. The chain is 23S rRNA (uracil(1939)-C(5))-methyltransferase RlmD from Shewanella amazonensis (strain ATCC BAA-1098 / SB2B).